Consider the following 3413-residue polypeptide: Protein pecanex (3413 aa).

2 helical membrane passes run 33–53 (VVHL…YLYF) and 57–77 (WLTW…VKLA). A glycan (N-linked (GlcNAc...) asparagine) is linked at Asn-164. The span at 182 to 195 (GSQQDQQSLAGSAS) shows a compositional bias: low complexity. 2 disordered regions span residues 182–213 (GSQQ…STSA) and 235–314 (GSSA…ENKL). A compositionally biased stretch (polar residues) spans 196–213 (VSKSIRSTGPGGNSSTSA). N-linked (GlcNAc...) asparagine glycosylation is present at Asn-208. The span at 302–312 (AAAAANSNAEN) shows a compositional bias: low complexity. Asn-317 carries N-linked (GlcNAc...) asparagine glycosylation. Disordered stretches follow at residues 327–363 (PSFL…GDAP), 379–403 (LVNP…RLKH), 540–609 (PGTG…GTGG), and 625–651 (PSVS…NPLP). The segment covering 330–354 (LHSQPTNKARGQTNPRQHFITSAPS) has biased composition (polar residues). The span at 392 to 402 (RSSETHDERLK) shows a compositional bias: basic and acidic residues. Over residues 541–559 (GTGGSVTGGGGAAGGGGSA) the composition is skewed to gly residues. Residues Asn-569 and Asn-581 are each glycosylated (N-linked (GlcNAc...) asparagine). Over residues 569–582 (NATSYKHGSSQSNK) the composition is skewed to polar residues. Residues 599-609 (GTSGGAGGTGG) show a composition bias toward gly residues. Residues 625–634 (PSVSNLSPHP) show a composition bias toward polar residues. Residue Asn-685 is glycosylated (N-linked (GlcNAc...) asparagine). The segment covering 720 to 730 (EKTAHEEHGDD) has biased composition (basic and acidic residues). 4 disordered regions span residues 720–745 (EKTA…DDEV), 816–873 (HHHS…NRQP), 886–921 (RQEL…DCEQ), and 1002–1021 (KQTK…HSIS). The segment covering 816-826 (HHHSHLHHHKA) has biased composition (basic residues). The span at 828-846 (SVEGAGPSGGSVAVGVSAG) shows a compositional bias: low complexity. The span at 847 to 856 (NDDEDEETED) shows a compositional bias: acidic residues. An N-linked (GlcNAc...) asparagine glycan is attached at Asn-857. Residues 1008-1021 (SRNSSSSNSTHSIS) show a composition bias toward low complexity. Asn-1010, Asn-1015, Asn-1069, and Asn-1199 each carry an N-linked (GlcNAc...) asparagine glycan. Helical transmembrane passes span 1315 to 1335 (MHVL…AAIL) and 1343 to 1363 (LCAL…VKSV). Asn-1375 carries N-linked (GlcNAc...) asparagine glycosylation. The next 4 helical transmembrane spans lie at 1376–1396 (KTVA…LLLL), 1423–1443 (VVAL…IIFS), 1474–1494 (LLGS…LYGP), and 1504–1524 (GTQY…GYHL). N-linked (GlcNAc...) asparagine glycosylation occurs at Asn-1572. 3 disordered regions span residues 1577 to 1675 (QLTT…TGEP), 1722 to 1744 (DKIS…GAGT), and 1760 to 1813 (AEAE…LPDP). Composition is skewed to basic and acidic residues over residues 1587–1598 (RQTDVKTEHEQI) and 1607–1620 (TVNE…HGAD). Residues 1639-1666 (KTSSLGSSQQTLGKTISSSKRAITASSS) are compositionally biased toward low complexity. Residues 1725 to 1738 (SSSSATNPGDMSTL) show a composition bias toward polar residues. 5 repeat units span residues 1776 to 1777 (GT), 1778 to 1779 (GT), 1780 to 1781 (GT), 1782 to 1783 (GT), and 1784 to 1785 (GT). The segment at 1776 to 1785 (GTGTGTGTGT) is 5 X 2 AA tandem repeats of G-T. Residues Asn-1791 and Asn-1804 are each glycosylated (N-linked (GlcNAc...) asparagine). Low complexity predominate over residues 1799–1808 (GNTNSNGTGN). 5 helical membrane passes run 1830–1850 (LVVM…TVFT), 1856–1876 (LNVV…YIVP), 1914–1934 (LYIY…AISS), 1940–1960 (QLIV…ICAL), and 1976–1996 (IIIF…ETFI). Positions 2344-2463 (SMGGAPPAQA…HSFANISRQT (120 aa)) are disordered. Residues 2346-2370 (GGAPPAQAPAAAGGASSAPATAGVA) are compositionally biased toward low complexity. N-linked (GlcNAc...) asparagine glycosylation is found at Asn-2380 and Asn-2387. The segment covering 2389-2411 (SAHGGQAGPSSGQSKSQSQQQLR) has biased composition (low complexity). A compositionally biased stretch (gly residues) spans 2437–2447 (GTGGVTGGGGD). Residues 2449-2463 (QLSSSHSFANISRQT) are compositionally biased toward polar residues. N-linked (GlcNAc...) asparagine glycans are attached at residues Asn-2458, Asn-2619, and Asn-2717. Disordered regions lie at residues 2908 to 2997 (LNRE…SSGS) and 3198 to 3242 (ESST…GDDG). The span at 2940 to 2956 (RRPEVGSSRGRDHERRA) shows a compositional bias: basic and acidic residues. A glycan (N-linked (GlcNAc...) asparagine) is linked at Asn-3246. The interval 3295–3413 (AEESKEKGTA…NGESEAGTTV (119 aa)) is disordered. Positions 3310–3323 (EGEEGVGEMEIEPE) are enriched in acidic residues. Positions 3364–3377 (TSSTSSAKSTSSPS) are enriched in low complexity. A compositionally biased stretch (acidic residues) spans 3380–3406 (QEEEDAVDPEETPELASEESPSDENGE).

The protein belongs to the pecanex family.

The protein resides in the membrane. In terms of biological role, involved in neurogenesis. In Drosophila melanogaster (Fruit fly), this protein is Protein pecanex (pcx).